Reading from the N-terminus, the 204-residue chain is Allatotropin (204 aa).

A signal peptide spans 1–20 (MNLTMQLAVIVAVCLCLAEG). The propeptide occupies 21 to 35 (APDVRLTRTKQQRPT). The interval 47–83 (RGFGKRDRPHPRAERDVDHQAPSARPNRGTPTFKSPT) is disordered. At Phe-49 the chain carries Phenylalanine amide. The span at 50 to 65 (GKRDRPHPRAERDVDH) shows a compositional bias: basic and acidic residues. Residues 53-204 (DRPHPRAERD…LSSEELLRNF (152 aa)) constitute a propeptide that is removed on maturation.

As to expression, expressed extensively in the brain, frontal ganglion and terminal ganglion of the day 2 fifth instar larva (at protein level). Not expressed in the larval brain after day 4 of the fifth instar, or in the brain of the pupa or adult. Expression in the terminal ganglion is localized to cells in the posterior portion of the seventh neuromere of day 2 fifth instar larvae. In the pupa and adult expression is detected in the medial region of neuromere 6, the dorsal medial region of neuromere 7, and the posterior neuromere of the terminal ganglion (at protein level). In the frontal ganglion expression decreases in the wandering larvae and is present at low levels in during pupal ecdysis, but is not detected in the adult. Expressed in the subesophageal ganglion of day 2 fifth instar larva, but not at any time before or after day 2. Not expressed in the abdominal ganglia 1-6 of the day 2 fifth instar larva (at protein level). Expressed in the anterior neuromeres of the pterothoracic ganglion in pupa but not in adult (at protein level). Expressed in the unfused abdominal ganglia of day 10 pupae, and in pharate adult is expressed in median neurosecretory cells M1, M2 and M5, but not in median neurosecretory cells M3 and M4 (at protein level). Not expressed in the differentiated median neurosecretory cells M5 of the larva (at protein level). In the pharate adult brain isoform 3 is the predominant form, with lower levels of isoform 2 and very low levels of isoform 1 detected. In the pharate adult nerve cord isoform 3 is the predominant form, with lower levels of isoform 2 and no isoform 1 detected. In the pharate adult frontal ganglion isoform 3 is expressed, but not isoform 1 and isoform 2.

Its subcellular location is the secreted. Functionally, neuropeptide stimulator of juvenile hormone synthesis. Cardioregulatory neurohormone that increases heart beat rate in the adult but not in the larva. Inhibits active ion transport in the midgut of feeding fourth instar and day 2 fifth instar larva, but not in the midgut of pharate or wandering fifth instar larva. This is Allatotropin from Manduca sexta (Tobacco hawkmoth).